The sequence spans 292 residues: ATP synthase gamma chain (292 aa).

It belongs to the ATPase gamma chain family. As to quaternary structure, F-type ATPases have 2 components, CF(1) - the catalytic core - and CF(0) - the membrane proton channel. CF(1) has five subunits: alpha(3), beta(3), gamma(1), delta(1), epsilon(1). CF(0) has three main subunits: a, b and c.

It is found in the cell inner membrane. Functionally, produces ATP from ADP in the presence of a proton gradient across the membrane. The gamma chain is believed to be important in regulating ATPase activity and the flow of protons through the CF(0) complex. The polypeptide is ATP synthase gamma chain (Chlorobaculum parvum (strain DSM 263 / NCIMB 8327) (Chlorobium vibrioforme subsp. thiosulfatophilum)).